Consider the following 71-residue polypeptide: UPF0346 protein Bcer98_1690 (71 aa).

This sequence belongs to the UPF0346 family.

The polypeptide is UPF0346 protein Bcer98_1690 (Bacillus cytotoxicus (strain DSM 22905 / CIP 110041 / 391-98 / NVH 391-98)).